The chain runs to 31 residues: Histone H1.3 (31 aa).

It belongs to the histone H1/H5 family.

It is found in the nucleus. It localises to the chromosome. Histones H1 are necessary for the condensation of nucleosome chains into higher-order structures. This chain is Histone H1.3, found in Triticum aestivum (Wheat).